The primary structure comprises 415 residues: Gamma-glutamyl phosphate reductase (415 aa).

The protein belongs to the gamma-glutamyl phosphate reductase family.

It localises to the cytoplasm. It catalyses the reaction L-glutamate 5-semialdehyde + phosphate + NADP(+) = L-glutamyl 5-phosphate + NADPH + H(+). Its pathway is amino-acid biosynthesis; L-proline biosynthesis; L-glutamate 5-semialdehyde from L-glutamate: step 2/2. Catalyzes the NADPH-dependent reduction of L-glutamate 5-phosphate into L-glutamate 5-semialdehyde and phosphate. The product spontaneously undergoes cyclization to form 1-pyrroline-5-carboxylate. This chain is Gamma-glutamyl phosphate reductase, found in Bacillus velezensis (strain DSM 23117 / BGSC 10A6 / LMG 26770 / FZB42) (Bacillus amyloliquefaciens subsp. plantarum).